We begin with the raw amino-acid sequence, 189 residues long: Elongation factor P (189 aa).

K34 is subject to N6-(3,6-diaminohexanoyl)-5-hydroxylysine.

This sequence belongs to the elongation factor P family. May be beta-lysylated on the epsilon-amino group of Lys-34 by the combined action of EpmA and EpmB, and then hydroxylated on the C5 position of the same residue by EpmC (if this protein is present). Lysylation is critical for the stimulatory effect of EF-P on peptide-bond formation. The lysylation moiety may extend toward the peptidyltransferase center and stabilize the terminal 3-CCA end of the tRNA. Hydroxylation of the C5 position on Lys-34 may allow additional potential stabilizing hydrogen-bond interactions with the P-tRNA.

It localises to the cytoplasm. The protein operates within protein biosynthesis; polypeptide chain elongation. Involved in peptide bond synthesis. Alleviates ribosome stalling that occurs when 3 or more consecutive Pro residues or the sequence PPG is present in a protein, possibly by augmenting the peptidyl transferase activity of the ribosome. Modification of Lys-34 is required for alleviation. The protein is Elongation factor P of Buchnera aphidicola subsp. Baizongia pistaciae (strain Bp).